A 275-amino-acid polypeptide reads, in one-letter code: 3-methyl-2-oxobutanoate hydroxymethyltransferase (275 aa).

2 residues coordinate Mg(2+): D55 and D94. 3-methyl-2-oxobutanoate-binding positions include 55–56 (DS), D94, and K122. E124 contributes to the Mg(2+) binding site. E191 acts as the Proton acceptor in catalysis.

The protein belongs to the PanB family. As to quaternary structure, homodecamer; pentamer of dimers. It depends on Mg(2+) as a cofactor.

It is found in the cytoplasm. It catalyses the reaction 3-methyl-2-oxobutanoate + (6R)-5,10-methylene-5,6,7,8-tetrahydrofolate + H2O = 2-dehydropantoate + (6S)-5,6,7,8-tetrahydrofolate. Its pathway is cofactor biosynthesis; (R)-pantothenate biosynthesis; (R)-pantoate from 3-methyl-2-oxobutanoate: step 1/2. Functionally, catalyzes the reversible reaction in which hydroxymethyl group from 5,10-methylenetetrahydrofolate is transferred onto alpha-ketoisovalerate to form ketopantoate. The chain is 3-methyl-2-oxobutanoate hydroxymethyltransferase from Marinomonas sp. (strain MWYL1).